The sequence spans 524 residues: GMP synthase [glutamine-hydrolyzing] (524 aa).

The Glutamine amidotransferase type-1 domain occupies 9-207; that stretch reads RILILDFGSQ…VIHICQCIPN (199 aa). C86 serves as the catalytic Nucleophile. Active-site residues include H181 and E183. The GMPS ATP-PPase domain maps to 208 to 399; the sequence is WTTKHIIEDS…LGLPADLIYR (192 aa). 235–241 is a binding site for ATP; the sequence is SGGVDSA.

As to quaternary structure, homodimer.

The enzyme catalyses XMP + L-glutamine + ATP + H2O = GMP + L-glutamate + AMP + diphosphate + 2 H(+). Its pathway is purine metabolism; GMP biosynthesis; GMP from XMP (L-Gln route): step 1/1. Functionally, catalyzes the synthesis of GMP from XMP. In Coxiella burnetii (strain RSA 331 / Henzerling II), this protein is GMP synthase [glutamine-hydrolyzing].